The primary structure comprises 667 residues: Probable oxidoreductase YyaE (667 aa).

The 58-residue stretch at 2–59 (SKVHQSACPLNCWDSCGFLVTVDDGKVTKVDGDPNHPITEGKICGRGRMLETKTNSPD) folds into the 4Fe-4S Mo/W bis-MGD-type domain. Cys9, Cys13, Cys17, and Cys45 together coordinate [4Fe-4S] cluster.

Belongs to the prokaryotic molybdopterin-containing oxidoreductase family. It depends on Mo-bis(molybdopterin guanine dinucleotide) as a cofactor.

In Bacillus subtilis (strain 168), this protein is Probable oxidoreductase YyaE (yyaE).